The sequence spans 59 residues: uncharacterized protein (59 aa).

The interval 1–59 is disordered; that stretch reads MAKKPGENTGKNGGIYQEVGPRGGKKDNFATVKDNERLPPTTKPGNGWVLDKRTPDSKK. Composition is skewed to basic and acidic residues over residues 24 to 37 and 50 to 59; these read GKKD…DNER and LDKRTPDSKK.

This is an uncharacterized protein from Salmonella phage P22 (Bacteriophage P22).